A 244-amino-acid polypeptide reads, in one-letter code: Purine nucleoside phosphorylase HI_0175 (244 aa).

Zn(2+) is bound by residues H70, C105, and H122.

This sequence belongs to the purine nucleoside phosphorylase YfiH/LACC1 family. As to quaternary structure, homodimer. Requires Cu(2+) as cofactor. Zn(2+) is required as a cofactor.

It carries out the reaction adenosine + phosphate = alpha-D-ribose 1-phosphate + adenine. It catalyses the reaction S-methyl-5'-thioadenosine + phosphate = 5-(methylsulfanyl)-alpha-D-ribose 1-phosphate + adenine. The enzyme catalyses inosine + phosphate = alpha-D-ribose 1-phosphate + hypoxanthine. The catalysed reaction is adenosine + H2O + H(+) = inosine + NH4(+). Functionally, purine nucleoside enzyme that catalyzes the phosphorolysis of adenosine and inosine nucleosides, yielding D-ribose 1-phosphate and the respective free bases, adenine and hypoxanthine. Also catalyzes the phosphorolysis of S-methyl-5'-thioadenosine into adenine and S-methyl-5-thio-alpha-D-ribose 1-phosphate. Also has adenosine deaminase activity. The polypeptide is Purine nucleoside phosphorylase HI_0175 (Haemophilus influenzae (strain ATCC 51907 / DSM 11121 / KW20 / Rd)).